A 305-amino-acid polypeptide reads, in one-letter code: Large ribosomal subunit protein uL10 (305 aa).

It belongs to the universal ribosomal protein uL10 family. P0 forms a pentameric complex by interaction with dimers of P1 and P2. Post-translationally, phosphorylated.

Ribosomal protein P0 is the functional equivalent of E.coli protein L10. The polypeptide is Large ribosomal subunit protein uL10 (rplp0) (Dictyostelium discoideum (Social amoeba)).